Consider the following 288-residue polypeptide: Putative hydrolase LipZ (288 aa).

Belongs to the AB hydrolase superfamily.

The sequence is that of Putative hydrolase LipZ from Mycobacterium tuberculosis (strain CDC 1551 / Oshkosh).